Reading from the N-terminus, the 583-residue chain is Sphingomyelin phosphodiesterase A (583 aa).

The first 21 residues, methionine 1–serine 21, serve as a signal peptide directing secretion. The 83-residue stretch at isoleucine 51–glycine 133 folds into the Saposin B-type domain. 3 disulfide bridges follow: cysteine 55/cysteine 129, cysteine 58/cysteine 123, and cysteine 86/cysteine 97. N-linked (GlcNAc...) asparagine glycosylation is present at asparagine 72. Asparagine 182 carries N-linked (GlcNAc...) asparagine glycosylation. The Zn(2+) site is built by aspartate 193 and histidine 195. A disulfide bridge links cysteine 214 with cysteine 229. Zn(2+) contacts are provided by aspartate 258 and asparagine 298. N-linked (GlcNAc...) asparagine glycosylation is present at asparagine 377. Zn(2+) contacts are provided by histidine 401, histidine 436, and histidine 438. N-linked (GlcNAc...) asparagine glycans are attached at residues asparagine 495, asparagine 500, asparagine 537, and asparagine 547. Cysteine 567 and cysteine 580 are oxidised to a cystine.

Belongs to the acid sphingomyelinase family. The cofactor is Zn(2+).

It localises to the secreted. Functionally, converts sphingomyelin to ceramide. The protein is Sphingomyelin phosphodiesterase A (sgmA) of Dictyostelium discoideum (Social amoeba).